We begin with the raw amino-acid sequence, 562 residues long: Ikaros family zinc finger protein (562 aa).

C2H2-type zinc fingers lie at residues 45–67 (IKCE…IRSH), 73–95 (FKCH…YKIH), and 101–123 (FQCP…MRIH). Residues 129–152 (YRCSYCARSYKSRQSMKEHEYQCP) form a C2H2-type 4; degenerate zinc finger. Disordered regions lie at residues 178–210 (NPLA…PPYP), 293–342 (QNQQ…VKPT), 361–404 (QLED…KEDD), and 451–473 (DESK…STQD). The segment covering 307–326 (PSLSEATPSSHSSHSSAEDS) has biased composition (low complexity). Polar residues predominate over residues 327–336 (GQVNKFSPTE). Residues 369–383 (DSRKRPHSFESEPTP) show a composition bias toward basic and acidic residues. Over residues 456-471 (EISSVDSRSPLDQSST) the composition is skewed to polar residues. 2 C2H2-type zinc fingers span residues 494-516 (WECK…MGVH) and 522-546 (LVCN…HHQH).

It belongs to the Ikaros C2H2-type zinc-finger protein family. In terms of tissue distribution, expression is strongest in the anterior Fol cells of the oikoplastic epithelium.

It localises to the nucleus. The polypeptide is Ikaros family zinc finger protein (Oikopleura dioica (Tunicate)).